The sequence spans 227 residues: Ribonuclease 3 (227 aa).

The RNase III domain maps to 4 to 133 (FETLEKLLGY…LIAAIYLDSN (130 aa)). Residue E46 participates in Mg(2+) binding. D50 is an active-site residue. 2 residues coordinate Mg(2+): N119 and E122. E122 is an active-site residue. Positions 158 to 226 (DPKTALQEWA…ARDLLHRLQD (69 aa)) constitute a DRBM domain.

Belongs to the ribonuclease III family. In terms of assembly, homodimer. It depends on Mg(2+) as a cofactor.

It localises to the cytoplasm. The catalysed reaction is Endonucleolytic cleavage to 5'-phosphomonoester.. Its function is as follows. Digests double-stranded RNA. Involved in the processing of primary rRNA transcript to yield the immediate precursors to the large and small rRNAs (23S and 16S). Processes some mRNAs, and tRNAs when they are encoded in the rRNA operon. Processes pre-crRNA and tracrRNA of type II CRISPR loci if present in the organism. This is Ribonuclease 3 from Rickettsia akari (strain Hartford).